The primary structure comprises 128 residues: Z-ring associated protein G (128 aa).

A helical membrane pass occupies residues 7-27; sequence EIWFSISIAFLIGTLCGVLVM. Residues 37–75 adopt a coiled-coil conformation; it reads QIQLKSELASAEAKIEEQKQQLERHFEQSANLLENLAED. Positions 105-128 are disordered; the sequence is NHANGDEDNQPRDYSDGSSGLLKS. Positions 107–119 are enriched in basic and acidic residues; sequence ANGDEDNQPRDYS.

The protein belongs to the ZapG family. Homotetramer. In solution, is primarily monomeric but forms small amounts of stable tetramer and hexadecamer. The crystal structure of the cytosolic region shows a coiled-coil tetramer in the asymmetric unit that is very likely to be a physiologically relevant assembly of the protein.

Its subcellular location is the cell inner membrane. In terms of biological role, involved in cell division, cell envelope biogenesis and cell shape maintenance. This chain is Z-ring associated protein G, found in Haemophilus ducreyi (strain 35000HP / ATCC 700724).